Here is a 769-residue protein sequence, read N- to C-terminus: MLDSFKEDPKLRKLLFSGHFGLEKENIRVTSDGKLALTPHPAIFGPKEDNPYIKTDFSESQIEMITPVTDSIDSVYEWLENLHNIVSLRSENELLWPSSNPPILPAEEDIPIAEYKTPDSPDRKYREHLAKGYGKKIQLLSGIHYNFSFPEALIDGLYDKISLPEESKQDFKNRLYLKVAKYFMKNRWLLIYLTGASPVYLADFSKTKHDESLPDGSSALRDGISLRNSNAGYKNKEALYVDYNSFDAYISSISNYIEAGKIESMREFYNPIRLKNAHTDQTVESLAEHGVEYLEIRSIDLNPLESNGISKDELAFIHLFLIKGLLSEDRELCSNNQQLADENENNIALNGLAQPALKNCDNEEISVVEAGLLELNKMSDFIQSLRPEDTKLQAIIEKQKERLLHPEKTIAAQVKQQVTKEGYVDFHLNQAKTYMEETEALAYKLIGAEDMELSTQIIWKDAIARGIKVDVLDRAENFLRFQKGDHVEYVKQASKTSKDNYVSVLMMENKVVTKLVLAEHDIRVPFGDSFSDQALALEAFSLFEDKQIVVKPKSTNYGWGISIFKNKFTLEDYQEALNIAFSYDSSVIIEEFIPGDEFRFLVINDKVEAVLKRVPANVTGDGIHTVRELVEEKNTDPLRGTDHLKPLEKIRTGPEETLMLSMQNLSWDSIPKAEEIIYLRENSNVSTGGDSIDYTEEMDDYFKEIAIRATQVLDAKICGVDIIVPRETIDRDKHAIIELNFNPAMHMHCFPYQGEKKKIGDKILDFLFE.

The tract at residues 1-347 is glutamate--cysteine ligase; that stretch reads MLDSFKEDPK…QLADENENNI (347 aa). The region spanning 514–768 is the ATP-grasp domain; that stretch reads KLVLAEHDIR…IGDKILDFLF (255 aa). Position 541–599 (541–599) interacts with ATP; that stretch reads SLFEDKQIVVKPKSTNYGWGISIFKNKFTLEDYQEALNIAFSYDSSVIIEEFIPGDEFR. Residues aspartate 721, glutamate 738, and asparagine 740 each contribute to the Mg(2+) site. 3 residues coordinate Mn(2+): aspartate 721, glutamate 738, and asparagine 740.

The protein in the N-terminal section; belongs to the glutamate--cysteine ligase type 1 family. Type 2 subfamily. As to quaternary structure, monomer. It depends on Mg(2+) as a cofactor. Requires Mn(2+) as cofactor.

It catalyses the reaction L-cysteine + L-glutamate + ATP = gamma-L-glutamyl-L-cysteine + ADP + phosphate + H(+). It carries out the reaction gamma-L-glutamyl-L-cysteine + glycine + ATP = glutathione + ADP + phosphate + H(+). The protein operates within sulfur metabolism; glutathione biosynthesis; glutathione from L-cysteine and L-glutamate: step 1/2. It functions in the pathway sulfur metabolism; glutathione biosynthesis; glutathione from L-cysteine and L-glutamate: step 2/2. Synthesizes glutathione from L-glutamate and L-cysteine via gamma-L-glutamyl-L-cysteine. This is Glutathione biosynthesis bifunctional protein GshAB from Listeria monocytogenes serotype 4b (strain F2365).